Reading from the N-terminus, the 633-residue chain is MIKVTFLAEQKVKEYSGRVTGFDILQPDALREAIAFKVNGELYDLSREIESDTEIEVIQLSDEAGLDIIRHDAAHIMAQAVKELFPNTQITIGPTIQDGFYYDFATDRTFTTDDLAAIEKKMKEIIKSNHRFVREVWTRKQAIDFFSDIGERYKVDIVSSIPENENLTVYKQGNFVDLCRGPHSPSTGRVKAFKLMKVAGAYWRGDSKGPMLQRIYGTAWRNKDELNTYLKRLEEAEKRDHRKIAKDMDLFHIQEEAVGQIFWHEQGYTLYNVLESYIRKKLMNNGYFEVKTPILVSKELWEKSGHWDKFRENMFIIDESESKKLAIKPMNCPCHVQIFNSHIRSYRDLPIRMAEFGTCHRNESSGSLHGLMRVRGFTQDDAHIFCMEKQVNSETVKFCDLLKEVYSELGFNEISVKFSDRPDTRSGNDEVWDRAERALLEAVKEAGLSYELNPGEGAFYGPKLEFILKDAIGRNWQCGTLQVDFILPERLGAFYIGTDGHKHHPVMLHRAILGTFERFIGILIENYAGKFPVWLAPTQLAILTITNESDGYATEISNVLKEQGVRIKTDLTNEKISYKIRLHSSSKVPILWIIGKNEVTNKTVSVRNLGSEKQESFSLENATELLLKIINLN.

The TGS domain occupies 1–59 (MIKVTFLAEQKVKEYSGRVTGFDILQPDALREAIAFKVNGELYDLSREIESDTEIEVIQ). A catalytic region spans residues 240 to 532 (DHRKIAKDMD…LIENYAGKFP (293 aa)). The Zn(2+) site is built by Cys332, His383, and His509.

This sequence belongs to the class-II aminoacyl-tRNA synthetase family. In terms of assembly, homodimer. Requires Zn(2+) as cofactor.

Its subcellular location is the cytoplasm. The enzyme catalyses tRNA(Thr) + L-threonine + ATP = L-threonyl-tRNA(Thr) + AMP + diphosphate + H(+). Catalyzes the attachment of threonine to tRNA(Thr) in a two-step reaction: L-threonine is first activated by ATP to form Thr-AMP and then transferred to the acceptor end of tRNA(Thr). Also edits incorrectly charged L-seryl-tRNA(Thr). The polypeptide is Threonine--tRNA ligase (Wolbachia pipientis subsp. Culex pipiens (strain wPip)).